A 440-amino-acid polypeptide reads, in one-letter code: MKRKVDEFMERHGLGVGDLVRVVKREGDERITFEGLVMPPYELSPGETLTIKLDNGYNIGILIDAIEGIEILEKAKEAPKMEFREVLPRKEGLPSVTILGTGGTIASRIDYKTGAVHAAFTAEELAKAVPEIFDIANITPKLLFNIMSEDMKPEYWKKIAHEAAKALNSDEDGVVIAHGTDTMGYTAAALSFMLRNLTKPVVLVGSQRSSDRPSSDAAMNLICATRMAVSDAAEVMVVMHGETSDTYCLAHRGTKVRKMHTSRRDTFRSINDVPIAKVWPDGKIEYLRDDYRKRGEGEVEVDDKFEEKVAILKIYPGVTSELLEFLVDRGYKGIVIEGTGLGHTPNDMIPAIERAVENGVAVCMTSQCLYGRVNLNVYSTGRRLLKAGVIPCEDMLPETAYVKLGWVLGHTDDLKEVRRMMLTNYAGEITPYTRFDTFLR.

The Asparaginase/glutaminase domain maps to 94–424 (PSVTILGTGG…KEVRRMMLTN (331 aa)). Active-site residues include T104, T180, D181, and K258.

This sequence belongs to the asparaginase 1 family. GatD subfamily. In terms of assembly, heterodimer of GatD and GatE.

The enzyme catalyses L-glutamyl-tRNA(Gln) + L-glutamine + ATP + H2O = L-glutaminyl-tRNA(Gln) + L-glutamate + ADP + phosphate + H(+). Functionally, allows the formation of correctly charged Gln-tRNA(Gln) through the transamidation of misacylated Glu-tRNA(Gln) in organisms which lack glutaminyl-tRNA synthetase. The reaction takes place in the presence of glutamine and ATP through an activated gamma-phospho-Glu-tRNA(Gln). The GatDE system is specific for glutamate and does not act on aspartate. This chain is Glutamyl-tRNA(Gln) amidotransferase subunit D, found in Thermococcus kodakarensis (strain ATCC BAA-918 / JCM 12380 / KOD1) (Pyrococcus kodakaraensis (strain KOD1)).